The primary structure comprises 856 residues: Cyclic di-GMP phosphodiesterase PdeB (856 aa).

2 helical membrane-spanning segments follow: residues 7–27 (ILVFIVGFCLPAVVLVSYCLG) and 230–250 (WVSLAVILLGILIVALGYVWL). In terms of domain architecture, PAS spans 303–350 (QKERGKITLESIAEAVILTDIEAKVIYMNPKAETLLEVASSNAVGESL). Positions 454–587 (RSLAVCYLDL…GTNQIHIYDD (134 aa)) constitute a GGDEF domain. The region spanning 598–852 (APKWAVRIAQ…SYCEQFETRL (255 aa)) is the EAL domain.

Its subcellular location is the cell membrane. It catalyses the reaction 3',3'-c-di-GMP + H2O = 5'-phosphoguanylyl(3'-&gt;5')guanosine + H(+). Functionally, affects motility and biofilm formation, and is linked to the regulation of sulfate uptake and assimilation. This chain is Cyclic di-GMP phosphodiesterase PdeB (pdeB), found in Shewanella oneidensis (strain ATCC 700550 / JCM 31522 / CIP 106686 / LMG 19005 / NCIMB 14063 / MR-1).